A 190-amino-acid chain; its full sequence is Pyridoxal 5'-phosphate synthase subunit PdxT (190 aa).

L-glutamine is bound at residue glycine 46–serine 48. Cysteine 78 acts as the Nucleophile in catalysis. Residues arginine 108 and isoleucine 137–arginine 138 contribute to the L-glutamine site. Catalysis depends on charge relay system residues histidine 174 and glutamate 176.

The protein belongs to the glutaminase PdxT/SNO family. As to quaternary structure, in the presence of PdxS, forms a dodecamer of heterodimers. Only shows activity in the heterodimer.

It carries out the reaction aldehydo-D-ribose 5-phosphate + D-glyceraldehyde 3-phosphate + L-glutamine = pyridoxal 5'-phosphate + L-glutamate + phosphate + 3 H2O + H(+). It catalyses the reaction L-glutamine + H2O = L-glutamate + NH4(+). Its pathway is cofactor biosynthesis; pyridoxal 5'-phosphate biosynthesis. Catalyzes the hydrolysis of glutamine to glutamate and ammonia as part of the biosynthesis of pyridoxal 5'-phosphate. The resulting ammonia molecule is channeled to the active site of PdxS. The chain is Pyridoxal 5'-phosphate synthase subunit PdxT from Herpetosiphon aurantiacus (strain ATCC 23779 / DSM 785 / 114-95).